The sequence spans 666 residues: Chaperone protein HtpG (666 aa).

Residues 1-374 (MSELNPVDNQ…SADLPLNVSR (374 aa)) are a; substrate-binding. The segment at 375–593 (ELLQESRDVK…EGELSPQMIQ (219 aa)) is b. Residues 594–666 (MLKQMGQDVP…LRRVNELLMR (73 aa)) form a c region.

The protein belongs to the heat shock protein 90 family. As to quaternary structure, homodimer.

It localises to the cytoplasm. Functionally, molecular chaperone. Has ATPase activity. This is Chaperone protein HtpG from Psychrobacter cryohalolentis (strain ATCC BAA-1226 / DSM 17306 / VKM B-2378 / K5).